A 98-amino-acid polypeptide reads, in one-letter code: SFAGILDDADITAALAACKAEGSFKHVEFFAKIGLAGKKVFAIIDQDKSDFVEEDELKLFLQVFSAGARALTDAETKAGDSDGDGKIGVDEFAQMIKG.

S1 is modified (N-acetylserine). EF-hand domains lie at 32–67 (KIGL…FSAG) and 67–98 (GARA…MIKG). Ca(2+) is bound by residues D45, D47, S49, F51, E53, E56, D80, D82, D84, K86, and E91.

It belongs to the parvalbumin family.

Functionally, in muscle, parvalbumin is thought to be involved in relaxation after contraction. It binds two calcium ions. This chain is Parvalbumin beta 1, found in Macruronus magellanicus (Patagonian grenadier).